The sequence spans 582 residues: Hemagglutinin-neuraminidase (582 aa).

The chain crosses the membrane as a helical span at residues 35 to 55; sequence ILVLSVQAVTLILVIVNLGEL. Disulfide bonds link cysteine 178-cysteine 202, cysteine 192-cysteine 253, and cysteine 244-cysteine 257. N-linked (GlcNAc...) asparagine; by host glycosylation is found at asparagine 284 and asparagine 329. 3 cysteine pairs are disulfide-bonded: cysteine 350-cysteine 471, cysteine 382-cysteine 392, and cysteine 465-cysteine 475. 2 N-linked (GlcNAc...) asparagine; by host glycosylation sites follow: asparagine 400 and asparagine 448. Residue asparagine 507 is glycosylated (N-linked (GlcNAc...) asparagine; by host). A disulfide bridge connects residues cysteine 545 and cysteine 556.

It belongs to the paramyxoviruses hemagglutinin-neuraminidase family. In terms of assembly, homotetramer; composed of disulfide-linked homodimers. Interacts with F protein trimer.

The protein resides in the virion membrane. The protein localises to the host cell membrane. The catalysed reaction is Hydrolysis of alpha-(2-&gt;3)-, alpha-(2-&gt;6)-, alpha-(2-&gt;8)- glycosidic linkages of terminal sialic acid residues in oligosaccharides, glycoproteins, glycolipids, colominic acid and synthetic substrates.. In terms of biological role, attaches the virus to alpha-2,3-linked sialic acid-containing cell receptors and thereby initiating infection. Binding of HN protein to the receptor induces a conformational change that allows the F protein to trigger virion/cell membranes fusion. Binds to the glycan motifs sialyl Lewis (SLe) and GM2 ganglioside (GM2-glycan). Neuraminidase activity ensures the efficient spread of the virus by dissociating the mature virions from the neuraminic acid containing glycoproteins. The chain is Hemagglutinin-neuraminidase (HN) from Homo sapiens (Human).